Reading from the N-terminus, the 199-residue chain is Probable thymidylate kinase (199 aa).

An ATP-binding site is contributed by 13–20; it reads GIDGAGKT.

This sequence belongs to the thymidylate kinase family.

The catalysed reaction is dTMP + ATP = dTDP + ADP. The protein is Probable thymidylate kinase of Staphylothermus marinus (strain ATCC 43588 / DSM 3639 / JCM 9404 / F1).